We begin with the raw amino-acid sequence, 202 residues long: MQDNQVLANTASMIMPKSSFITTKQLWEIVLQGKVEATEFIPADVSDSTQTVDRSNKISPITSQLTIEPNKSQTIVKKNPDNLIFVAVNQNVQLQLSILKQQQNRVAAMESALQRIHLEITAMSEQLILQKYQKNRFFFMSSINALIRISRNCIKLLFKNSLVLLAACYFMNTTPSRLVINLIRSGYLILKRFANPSYISFY.

It localises to the mitochondrion. This is an uncharacterized protein from Schizosaccharomyces pombe (strain 972 / ATCC 24843) (Fission yeast).